The chain runs to 222 residues: Interleukin-12 subunit alpha (222 aa).

The signal sequence occupies residues 1 to 25; that stretch reads MCPPRGLLLVAILVLLNHLDHLSLA. 3 cysteine pairs are disulfide-bonded: Cys40/Cys113, Cys67/Cys199, and Cys88/Cys126. Asn42, Asn96, and Asn110 each carry an N-linked (GlcNAc...) asparagine glycan.

This sequence belongs to the IL-6 superfamily. In terms of assembly, heterodimer with IL12B; disulfide-linked. This heterodimer is known as interleukin IL-12. Heterodimer with EBI3/IL27B; not disulfide-linked. This heterodimer is known as interleukin IL-35. Interacts with NBR1; this interaction promotes IL-12 secretion.

The protein localises to the secreted. Heterodimerizes with IL12B to form the IL-12 cytokine or with EBI3/IL27B to form the IL-35 cytokine. IL-12 is primarily produced by professional antigen-presenting cells (APCs) such as B-cells and dendritic cells (DCs) as well as macrophages and granulocytes and regulates T-cell and natural killer-cell responses, induces the production of interferon-gamma (IFN-gamma), favors the differentiation of T-helper 1 (Th1) cells and is an important link between innate resistance and adaptive immunity. Mechanistically, exerts its biological effects through a receptor composed of IL12R1 and IL12R2 subunits. Binding to the receptor results in the rapid tyrosine phosphorylation of a number of cellular substrates including the JAK family kinases TYK2 and JAK2. In turn, recruited STAT4 gets phosphorylated and translocates to the nucleus where it regulates cytokine/growth factor responsive genes. As part of IL-35, plays essential roles in maintaining the immune homeostasis of the liver microenvironment and also functions as an immune-suppressive cytokine. Mediates biological events through unconventional receptors composed of IL12RB2 and gp130/IL6ST heterodimers or homodimers. Signaling requires the transcription factors STAT1 and STAT4, which form a unique heterodimer that binds to distinct DNA sites. This Equus caballus (Horse) protein is Interleukin-12 subunit alpha (IL12A).